The sequence spans 1146 residues: Killer toxin subunits alpha/beta (1146 aa).

An N-terminal signal peptide occupies residues 1 to 17 (MNIFYIFLFLLSFVQGL). The propeptide occupies 18 to 29 (EHTHRRGSLVKR). LysM domains are found at residues 205 to 234 (ADQSGINGESLQGYNPNLDFSKLSAGQPIC) and 254 to 303 (KTYK…NLCV). Residues 316-372 (IAECGPLAPGEKYNAKCPLNACCSEFGFCGLTKDYCDKKSSTTGAPGTDGCFSNCGY) form the Chitin-binding type-1 domain. Disulfide bonds link Cys-319–Cys-338, Cys-332–Cys-344, Cys-337–Cys-351, and Cys-366–Cys-370. The GH18 domain maps to 383–735 (FKKIAYWLDA…DDTEDPFDEE (353 aa)). Residues Ile-424 and 447–450 (GGWD) each bind chitin. Catalysis depends on Glu-495, which acts as the Proton donor. Chitin-binding positions include Tyr-496, 562 to 565 (MTYD), and Trp-707. N-linked (GlcNAc...) asparagine glycosylation is found at Asn-771, Asn-858, Asn-868, Asn-876, and Asn-1117.

The protein belongs to the glycosyl hydrolase 18 family. As to quaternary structure, the killer toxin is composed of three subunits: alpha, beta and gamma. RF2 is potentially split by membrane-bound basic amino acid-specific peptidase to yield the alpha and beta subunits.

It carries out the reaction Random endo-hydrolysis of N-acetyl-beta-D-glucosaminide (1-&gt;4)-beta-linkages in chitin and chitodextrins.. Its function is as follows. The alpha subunit is a potent exochitinase. Along with the beta subunit it plays a role in the initial interaction of the toxin with sensitive cells and allow the gamma subunit (the active toxin) to gain entry into the cell. The chain is Killer toxin subunits alpha/beta from Kluyveromyces lactis (strain ATCC 8585 / CBS 2359 / DSM 70799 / NBRC 1267 / NRRL Y-1140 / WM37) (Yeast).